The following is a 256-amino-acid chain: uncharacterized protein (256 aa).

This is an uncharacterized protein from Acanthamoeba polyphaga mimivirus (APMV).